The sequence spans 368 residues: C2H2 type master regulator of conidiophore development BrlA (368 aa).

The C2H2-type 1; degenerate zinc-finger motif lies at 268–292; the sequence is CKCDYPGCHKAFRRNEHLKRHKQTF. Residues 300 to 323 form a C2H2-type 2 zinc finger; it reads FSCEFCGKDQFNRQDNLNNHRKLH. A disordered region spans residues 338-368; the sequence is AAVPIIEQEERSRKRRAPPKSKSADKRVDDY. Basic and acidic residues predominate over residues 359–368; the sequence is KSADKRVDDY.

It is found in the nucleus. In terms of biological role, brlA, abaA and wetA are pivotal regulators of conidiophore development and conidium maturation. They act individually and together to regulate their own expression and that of numerous other sporulation-specific genes. BrlA, abaA and wetA act together to positively regulate the expression of the Pks1 gene cluster that mediates the biosynthesis of an anthraquinone derivative pigment that contributes to conidial pigmentation that provides protection from UV radiation, heat and cold stress. The protein is C2H2 type master regulator of conidiophore development BrlA of Metarhizium robertsii (strain ARSEF 23 / ATCC MYA-3075) (Metarhizium anisopliae (strain ARSEF 23)).